A 414-amino-acid chain; its full sequence is O-methyltransferase sirM (414 aa).

Residue aspartate 270 participates in S-adenosyl-L-methionine binding. The Proton acceptor role is filled by histidine 321.

This sequence belongs to the class I-like SAM-binding methyltransferase superfamily. Cation-independent O-methyltransferase family. COMT subfamily.

It functions in the pathway mycotoxin biosynthesis. Its function is as follows. O-methyltransferase; part of the gene cluster that mediates the biosynthesis of sirodesmin PL, an epipolythiodioxopiperazine (ETP) characterized by a disulfide bridged cyclic dipeptide and that acts as a phytotoxin which is involved in the blackleg didease of canola. SirD catalyzes the O-prenylation of L-tyrosine (L-Tyr) in the presence of dimethylallyl diphosphate (DMAPP) to yield 4-O-dimethylallyl-L-Tyr, and therefore represents probably the first pathway-specific enzyme in the biosynthesis of sirodesmin PL. 4-O-dimethylallyl-L-Tyr, then undergoes condensation with L-Ser in a reaction catalyzed by the non-ribosomal peptide synthase sirP to form the diketopiperazine (DKP) backbone. Further bishydroxylation of the DKP performed by the cytochrome P450 monooxygenase sirC leads to the production of the intermediate phomamide. This step is essential to form the reactive thiol group required for toxicity of sirodesmin PL. The next steps of sirodesmin biosynthesis are not well understood yet, but some predictions could be made from intermediate compounds identification. Phomamide is converted into phomalizarine via oxidation, probably by sirT. Further oxidation, methylation (by sirM or sirN) and reduction steps convert phomalizarine to deacetyl sirodesmin. Finally, acetyltransferase sirH probably acetylates deacetyl sirodesmin to produce sirodesmin PL. This chain is O-methyltransferase sirM, found in Leptosphaeria maculans (Blackleg fungus).